The following is a 349-amino-acid chain: tRNA pseudouridine synthase D (349 aa).

Phe26 serves as a coordination point for substrate. Asp79 (nucleophile) is an active-site residue. Asn128 contacts substrate. One can recognise a TRUD domain in the interval Gly154–Val302. Phe328 contributes to the substrate binding site.

The protein belongs to the pseudouridine synthase TruD family.

The enzyme catalyses uridine(13) in tRNA = pseudouridine(13) in tRNA. Responsible for synthesis of pseudouridine from uracil-13 in transfer RNAs. The sequence is that of tRNA pseudouridine synthase D from Photorhabdus laumondii subsp. laumondii (strain DSM 15139 / CIP 105565 / TT01) (Photorhabdus luminescens subsp. laumondii).